We begin with the raw amino-acid sequence, 554 residues long: D-3-phosphoglycerate dehydrogenase (554 aa).

NAD(+)-binding positions include 177 to 178, aspartate 197, 256 to 258, and aspartate 282; these read KI and CSR. Arginine 258 is an active-site residue. Glutamate 287 is an active-site residue. Residue histidine 305 is the Proton donor of the active site. Residue 305–308 coordinates NAD(+); the sequence is HLGA. The region spanning 482–554 is the ACT domain; that stretch reads MLFTLHRDMP…GIRDAYTVKL (73 aa).

This sequence belongs to the D-isomer specific 2-hydroxyacid dehydrogenase family.

The catalysed reaction is (2R)-3-phosphoglycerate + NAD(+) = 3-phosphooxypyruvate + NADH + H(+). The enzyme catalyses (R)-2-hydroxyglutarate + NAD(+) = 2-oxoglutarate + NADH + H(+). It participates in amino-acid biosynthesis; L-serine biosynthesis; L-serine from 3-phospho-D-glycerate: step 1/3. Its function is as follows. Catalyzes the reversible oxidation of 3-phospho-D-glycerate to 3-phosphonooxypyruvate, the first step of the phosphorylated L-serine biosynthesis pathway. Also catalyzes the reversible oxidation of 2-hydroxyglutarate to 2-oxoglutarate. In Synechocystis sp. (strain ATCC 27184 / PCC 6803 / Kazusa), this protein is D-3-phosphoglycerate dehydrogenase (serA).